A 293-amino-acid polypeptide reads, in one-letter code: Iron-sulfur cluster transfer protein Nubpl (293 aa).

The CXXC motif probably involved in coordinating iron-sulfur cluster binding stretch occupies residues 214–217 (CQNC).

This sequence belongs to the Mrp/NBP35 ATP-binding proteins family. Homodimer; dimerization is not reliant on iron-sulfur cluster binding. It depends on [4Fe-4S] cluster as a cofactor.

The protein localises to the mitochondrion membrane. Its function is as follows. Iron-sulfur cluster transfer protein involved in the assembly of the mitochondrial membrane respiratory chain NADH dehydrogenase (Complex I). May deliver one or more Fe-S clusters to complex I subunits. Alleviates pausing in mitochondrial DNA (mtDNA) replication at slow zone 2. May be involved in mtDNA-helicase-mediated mtDNA unwinding and replication by transferring iron-sulfur clusters. This is Iron-sulfur cluster transfer protein Nubpl from Drosophila melanogaster (Fruit fly).